The primary structure comprises 564 residues: MFS-type transporter grgE (564 aa).

Residues 1 to 10 are compositionally biased toward basic and acidic residues; sequence MAENQVDPKR. The segment at 1–52 is disordered; that stretch reads MAENQVDPKRNLPLYGAADESTSATDKEDEVENVRQNGSAPPIEEARESNEA. N-linked (GlcNAc...) asparagine glycosylation is present at Asn37. The next 7 helical transmembrane spans lie at 60-80, 101-118, 131-151, 161-181, 192-212, 220-240, and 262-282; these read HGLS…IISL, KVSW…GFQT, TTFL…GVAP, AIAG…IAFS, GLVG…GGAF, WCFY…LIFF, and LVGV…LQYG. Asn289 carries N-linked (GlcNAc...) asparagine glycosylation. The next 7 membrane-spanning stretches (helical) occupy residues 293–313, 329–349, 368–388, 392–412, 425–445, 462–482, and 531–551; these read VIGL…WEYY, ALWA…ILLY, VRNL…GAFV, GIAT…TGLI, IGYQ…PMNI, IFLA…SAFV, and TFAI…FTPW.

This sequence belongs to the major facilitator superfamily.

The protein resides in the membrane. In terms of biological role, MFS-type transporter; part of the gene cluster that mediates the biosynthesis of gregatin A, a fungal polyketide featuring an alkylated furanone core. This is MFS-type transporter grgE from Penicillium sp.